Reading from the N-terminus, the 130-residue chain is Phosphoribosyl-AMP cyclohydrolase (130 aa).

A Mg(2+)-binding site is contributed by D74. C75 provides a ligand contact to Zn(2+). Positions 76 and 78 each coordinate Mg(2+). C91 and C98 together coordinate Zn(2+).

It belongs to the PRA-CH family. In terms of assembly, homodimer. Requires Mg(2+) as cofactor. Zn(2+) serves as cofactor.

Its subcellular location is the cytoplasm. It catalyses the reaction 1-(5-phospho-beta-D-ribosyl)-5'-AMP + H2O = 1-(5-phospho-beta-D-ribosyl)-5-[(5-phospho-beta-D-ribosylamino)methylideneamino]imidazole-4-carboxamide. Its pathway is amino-acid biosynthesis; L-histidine biosynthesis; L-histidine from 5-phospho-alpha-D-ribose 1-diphosphate: step 3/9. Catalyzes the hydrolysis of the adenine ring of phosphoribosyl-AMP. This Bradyrhizobium sp. (strain ORS 278) protein is Phosphoribosyl-AMP cyclohydrolase.